The chain runs to 894 residues: Histone-lysine N-methyltransferase PRDM9 (894 aa).

2 disordered regions span residues 1–23 (MSPEKSQEESPEEDTERTERKPM) and 143–174 (SGSEQAQKPVSPSGEASTSGQHSRLKLELRKK). The region spanning 23-86 (MVKDAFKDIS…RRQAIKLQVD (64 aa)) is the KRAB-related domain. The segment covering 143–164 (SGSEQAQKPVSPSGEASTSGQH) has biased composition (polar residues). Positions 205, 208, 216, and 219 each coordinate Zn(2+). The region spanning 244 to 358 (PGLRIGPSGI…PGCELLVWYG (115 aa)) is the SET domain. Residues 256 to 258 (AGL), Y291, and 320 to 321 (NC) contribute to the S-adenosyl-L-methionine site. 288–294 (NNGYSWL) contacts substrate. Position 357 (Y357) interacts with substrate. Position 368 is an N6,N6,N6-trimethyllysine; alternate (K368). An N6-methyllysine; alternate modification is found at K368. An N6-methyllysine mark is found at K372 and K374. A C2H2-type 1 zinc finger spans residues 388 to 411 (HPCPSCCLAFSSQKFLSQHVERNH). Zn(2+)-binding residues include C390, C393, H406, and H411. The tract at residues 408 to 469 (ERNHSSQNFP…SKLLNKRTWQ (62 aa)) is disordered. Residues 444–461 (PHSRNDKTKGQEIKERSK) are compositionally biased toward basic and acidic residues. The C2H2-type 2; degenerate zinc-finger motif lies at 524–546 (VKYGECGQGFSVKSDVITHQRTH). 12 consecutive C2H2-type zinc fingers follow at residues 552–574 (YVCRECGRGFSWKSHLLIHQRIH), 580–602 (YVCRECGRGFSWQSVLLTHQRTH), 608–630 (YVCRECGRGFSRQSVLLTHQRRH), 636–658 (YVCRECGRGFSRQSVLLTHQRRH), 664–686 (YVCRECGRGFSWQSVLLTHQRTH), 692–714 (YVCRECGRGFSWQSVLLTHQRTH), 720–742 (YVCRECGRGFSNKSHLLRHQRTH), 748–770 (YVCRECGRGFRDKSHLLRHQRTH), 776–798 (YVCRECGRGFRDKSNLLSHQRTH), 804–826 (YVCRECGRGFSNKSHLLRHQRTH), 832–854 (YVCRECGRGFRNKSHLLRHQRTH), and 860–882 (YVCRECGRGFSDRSSLCYHQRTH). Zn(2+) is bound by residues C722, C725, H738, H742, C750, C753, H766, H770, C778, C781, H794, H798, C806, C809, H822, and H826. The DNA-binding stretch occupies residues 730-820 (SNKSHLLRHQ…RGFSNKSHLL (91 aa)).

It belongs to the class V-like SAM-binding methyltransferase superfamily. As to quaternary structure, homodimer. Interacts with EHMT2 and CDYL; interaction only takes place when PRDM9 is bound to hotspot DNA. Interacts with CXXC1; this interaction does not link PRDM9-activated recombination hotspot sites with DSB machinery and is not required for the hotspot recognition pathway. Forms a complex with EWSR1, REC8, SYCP3 and SYCP1; complex formation is dependent of phosphorylated form of REC8 and requires PRDM9 bound to hotspot DNA; EWSR1 joins PRDM9 with the chromosomal axis through REC8. Mono-methylated; automethylated. Tri-methylated; automethylated. Mono-methylation is predominant; automethylation is lower and slower than H3 peptide methylation and is in a highest S-adenosyl-L-methionine concentration-dependent. There are two major sites for automethylation at Lys-368 and Lys-374. Lysines can be simultaneously methylated, such as Lys-368(me3)/Lys-372(me1), Lys-368(me1)/Lys-374(me1) and Lys-368(me1)/Lys-372(me1)/Lys-374(me1). Automethylation is an intramolecular (cis) process.

The protein resides in the nucleus. It is found in the chromosome. It catalyses the reaction L-lysyl-[protein] + S-adenosyl-L-methionine = N(6)-methyl-L-lysyl-[protein] + S-adenosyl-L-homocysteine + H(+). The enzyme catalyses N(6)-methyl-L-lysyl-[protein] + S-adenosyl-L-methionine = N(6),N(6)-dimethyl-L-lysyl-[protein] + S-adenosyl-L-homocysteine + H(+). It carries out the reaction L-lysyl(4)-[histone H3] + 3 S-adenosyl-L-methionine = N(6),N(6),N(6)-trimethyl-L-lysyl(4)-[histone H3] + 3 S-adenosyl-L-homocysteine + 3 H(+). The catalysed reaction is L-lysyl(36)-[histone H3] + 3 S-adenosyl-L-methionine = N(6),N(6),N(6)-trimethyl-L-lysyl(36)-[histone H3] + 3 S-adenosyl-L-homocysteine + 3 H(+). It catalyses the reaction L-lysyl(9)-[histone H3] + 3 S-adenosyl-L-methionine = N(6),N(6),N(6)-trimethyl-L-lysyl(9)-[histone H3] + 3 S-adenosyl-L-homocysteine + 3 H(+). The enzyme catalyses L-lysyl(20)-[histone H4] + S-adenosyl-L-methionine = N(6)-methyl-L-lysyl(20)-[histone H4] + S-adenosyl-L-homocysteine + H(+). It carries out the reaction N(6)-methyl-L-lysyl(20)-[histone H4] + S-adenosyl-L-methionine = N(6),N(6)-dimethyl-L-lysyl(20)-[histone H4] + S-adenosyl-L-homocysteine + H(+). Inhibited by suramin with an IC(50) of 4.1 uM. Functionally, histone methyltransferase that sequentially mono-, di-, and tri-methylates both 'Lys-4' (H3K4) and 'Lys-36' (H3K36) of histone H3 to produce respectively trimethylated 'Lys-4' (H3K4me3) and trimethylated 'Lys-36' (H3K36me3) histone H3 and plays a key role in meiotic prophase by determining hotspot localization thereby promoting meiotic recombination. Can also methylate all four core histones with H3 being the best substrate and the most highly modified. Is also able, on one hand, to mono and di-methylate H4K20 and on other hand to trimethylate H3K9 with the di-methylated H3K9 as the best substrate. During meiotic prophase, binds specific DNA sequences through its zinc finger domains thereby determining hotspot localization where it promotes local H3K4me3 and H3K36me3 enrichment on the same nucleosomes through its histone methyltransferase activity. Thereby promotes double-stranded breaks (DSB) formation, at this subset of PRDM9-binding sites, that initiates meiotic recombination for the proper meiotic progression. During meiotic progression hotspot-bound PRDM9 interacts with several complexes; in early leptonema binds CDYL and EHMT2 followed by EWSR1 and CXXC1 by the end of leptonema. EWSR1 joins PRDM9 with the chromosomal axis through REC8. In this way, controls the DSB repair pathway, pairing of homologous chromosomes and sex body formation. Moreover plays a central role in the transcriptional activation of genes during early meiotic prophase thanks to H3K4me3 and H3K36me3 enrichment that represents a specific tag for epigenetic transcriptional activation. In addition performs automethylation. Acetylation and phosphorylation of histone H3 attenuate or prevent histone H3 methylation. This Homo sapiens (Human) protein is Histone-lysine N-methyltransferase PRDM9.